A 1285-amino-acid chain; its full sequence is Protein crumbs homolog 2 (1285 aa).

The first 28 residues, 1–28, serve as a signal peptide directing secretion; it reads MALARPGTPDPQALASVLLLLLWAPALS. Residues 1–350 form a required for maximum inhibition of APP amyloid-beta peptide secretion region; that stretch reads MALARPGTPD…GFQCHCPDGY (350 aa). The 40-residue stretch at 67–106 folds into the EGF-like 1 domain; that stretch reads EPRGCATQPCHHGALCVPQGPDPTGFRCYCVPGFQGPRCE. Intrachain disulfides connect Cys-71/Cys-82, Cys-76/Cys-94, Cys-96/Cys-105, Cys-112/Cys-123, Cys-117/Cys-132, Cys-134/Cys-143, Cys-150/Cys-161, Cys-155/Cys-170, Cys-172/Cys-181, Cys-188/Cys-199, Cys-193/Cys-208, Cys-210/Cys-220, Cys-227/Cys-238, Cys-232/Cys-247, Cys-249/Cys-258, Cys-265/Cys-276, Cys-270/Cys-306, Cys-308/Cys-317, Cys-324/Cys-335, Cys-329/Cys-344, Cys-346/Cys-355, Cys-362/Cys-373, Cys-367/Cys-382, Cys-384/Cys-393, Cys-400/Cys-411, Cys-405/Cys-424, and Cys-426/Cys-435. One can recognise an EGF-like 2; calcium-binding domain in the interval 108–144; sequence DIDECASRPCHHGATCRNLADRYECHCPLGYAGVTCE. Residues 146–182 form the EGF-like 3; calcium-binding domain; that stretch reads EVDECASAPCLHGGSCLDGVGSFRCVCAPGYGGTRCQ. In terms of domain architecture, EGF-like 4; calcium-binding spans 184–221; it reads DLDECQSQPCAHGGTCHDLVNGFRCDCAGTGYEGTHCE. EGF-like domains are found at residues 223-259 and 261-318; these read EVLECASAPCEHNASCLEGLGSFRCLCWPGYSGELCE and DEDE…ADCG. Asn-235 carries N-linked (GlcNAc...) asparagine glycosylation. Ser-267 carries an O-linked (Glc...) serine glycan. Residues 320-356 enclose the EGF-like 7; calcium-binding domain; sequence EVDECASRPCLNGGHCQDLPNGFQCHCPDGYAGPTCE. An EGF-like 8; calcium-binding domain is found at 358–394; sequence DVDECLSDPCLHGGTCSDTVAGYICRCPETWGGRDCS. The EGF-like 9 domain occupies 396 to 436; it reads QLTGCQGHTCPLAATCIPIFESGVHSYVCHCPPGTHGPFCG. The region spanning 431-603 is the Laminin G-like 1 domain; the sequence is HGPFCGQNTT…DLGENVLLGC (173 aa). N-linked (GlcNAc...) asparagine glycans are attached at residues Asn-438 and Asn-478. 4 disulfide bridges follow: Cys-579–Cys-603, Cys-609–Cys-620, Cys-614–Cys-629, and Cys-631–Cys-640. One can recognise an EGF-like 10 domain in the interval 605–641; that stretch reads RREQCRPLPCVHGGSCVDLWTHFRCDCARPHRGPTCA. Residues 647 to 805 enclose the Laminin G-like 2 domain; sequence ATFGLGGAPS…RQSWNLTAGC (159 aa). Asn-669, Asn-690, Asn-786, and Asn-800 each carry an N-linked (GlcNAc...) asparagine glycan. 4 cysteine pairs are disulfide-bonded: Cys-766–Cys-805, Cys-811–Cys-822, Cys-816–Cys-831, and Cys-833–Cys-842. Residues 807–843 form the EGF-like 11 domain; that stretch reads SEDMCSPDPCFNGGTCLVTWNDFHCTCPANFTGPTCA. Residues Asn-836, Asn-886, Asn-926, and Asn-1009 are each glycosylated (N-linked (GlcNAc...) asparagine). Positions 871-1054 constitute a Laminin G-like 3 domain; it reads EATFREGPPA…PGTPAPILGC (184 aa). Cystine bridges form between Cys-1013/Cys-1054, Cys-1060/Cys-1071, Cys-1065/Cys-1080, Cys-1082/Cys-1091, Cys-1098/Cys-1108, Cys-1103/Cys-1118, Cys-1120/Cys-1129, Cys-1138/Cys-1150, Cys-1144/Cys-1159, Cys-1161/Cys-1170, Cys-1177/Cys-1188, Cys-1182/Cys-1197, and Cys-1199/Cys-1208. 4 consecutive EGF-like domains span residues 1056–1092, 1094–1130, 1134–1171, and 1173–1209; these read GAPVCAPSPCLHDGACRDLFDAFACACGPGWEGPRCE, HVDPCHSAPCARGRCHTHPDGRFECRCPPGFGGPRCR, PSKECSLNVTCLDGSPCEGGSPAANCSCLEGLAGQRCQ, and PTLPCEANPCLNGGTCRAAGGVSECICNARFSGQFCE. N-linked (GlcNAc...) asparagine glycans are attached at residues Asn-1141 and Asn-1158. A helical transmembrane segment spans residues 1225-1245; sequence VAVPAACACLLLLLLGLLSGI. The interaction with EPB41L5 stretch occupies residues 1249–1285; sequence RKRRQSEGTYSPSQQEVAGARLEMDSVLKVPPEERLI.

This sequence belongs to the Crumbs protein family. As to quaternary structure, associates with the gamma-secretase complex via interaction (via the transmembrane domain) with PSEN1/PS1. Interacts (via intracellular domain) with EPB41L5. Interacts with PALS1. Post-translationally, O-glucosylated by POGLUT1 at Ser-267; consists of an O-glucose trisaccharide, in which the O-glucose is elongated by the addition of two xylose residues. O-glucosylation is required for localization at the plasma membrane. N-glycosylated. In terms of tissue distribution, expressed in glomeruli, podocytes of the glomerular capillary loops, and parietal glomerular epithelial cells in the kidney (at protein level). Expressed in retina, fetal eye and brain. Also expressed in kidney, RPE/choroid, and at low levels in lung, placenta, and heart.

It localises to the apical cell membrane. The protein localises to the cytoplasm. The protein resides in the cell junction. It is found in the secreted. Apical polarity protein that plays a central role during the epithelial-to-mesenchymal transition (EMT) at gastrulation, when newly specified mesodermal cells move inside the embryo. Acts by promoting cell ingression, the process by which cells leave the epithelial epiblast and move inside the embryo to form a new tissue layer. The anisotropic distribution of CRB2 and MYH10/myosin-IIB at cell edges define which cells will ingress: cells with high apical CRB2 are probably extruded from the epiblast by neighboring cells with high levels of apical MYH10/myosin-IIB. Plays a role in the maintenance of retinal neuroepithelium organization, structural integrity, adhesion, photoreceptor polarity and retinal photoreceptor layer thickness. May play a role in determining the length of cone photoreceptor outer segments and proliferation of late-born progenitor cells. Also required for maintenance of the apical polarity complex during development of the cortex. Inhibits gamma-secretase-dependent cleavage of APP and secretion of amyloid-beta peptide 40 and amyloid-beta peptide 42, and thereby inhibits gamma-secretase-dependent Notch transcription. The protein is Protein crumbs homolog 2 of Homo sapiens (Human).